The following is an 84-amino-acid chain: Cell division topological specificity factor (84 aa).

Belongs to the MinE family.

Prevents the cell division inhibition by proteins MinC and MinD at internal division sites while permitting inhibition at polar sites. This ensures cell division at the proper site by restricting the formation of a division septum at the midpoint of the long axis of the cell. The protein is Cell division topological specificity factor of Burkholderia cenocepacia (strain ATCC BAA-245 / DSM 16553 / LMG 16656 / NCTC 13227 / J2315 / CF5610) (Burkholderia cepacia (strain J2315)).